The following is a 305-amino-acid chain: MKTVLELKNVTKNIRGRTIIDDLSFTIREGEVFGFLGPNGAGKTTTIRMMVGLMKLSKGDVLICGQSITKEYAKAIKHIGAIVENPELYKFLSGYKNLQQFARMVKGVTKEKIDEVVELVGLTDRIHDKVKTYSLGMRQRLGLAQCLLHDPKVLILDEPTNGLDPAGIREIRDHLKKLTRERGMAVIVSSHLLSEMELMCDRIAILQKGKLIDIQNVKDENIDENDTYFFQVEQPSEAATVLNQYDLLSKTNGVEIKLAKEEVPAVIELLVMQQIRIYEVKVITKSLEDRFLEMTGETKEEVQHA.

The region spanning 5–233 is the ABC transporter domain; sequence LELKNVTKNI…ENDTYFFQVE (229 aa). ATP is bound at residue 37–44; the sequence is GPNGAGKT.

It belongs to the ABC transporter superfamily.

This is an uncharacterized protein from Bacillus subtilis (strain 168).